The chain runs to 58 residues: U11-ctenitoxin-Pn1b (58 aa).

5 disulfide bridges follow: Cys2–Cys16, Cys9–Cys22, Cys15–Cys40, Cys24–Cys38, and Cys48–Cys55.

As to expression, expressed by the venom gland.

The protein resides in the secreted. Functionally, non-toxic to mice. The protein is U11-ctenitoxin-Pn1b of Phoneutria nigriventer (Brazilian armed spider).